Consider the following 904-residue polypeptide: DNA polymerase I (904 aa).

A 5'-3' exonuclease domain is found at 186-279 (TPRQYPDFAA…DTLRLQPWDR (94 aa)). Positions 317 to 493 (RGGALAPGTV…LADALDAELA (177 aa)) constitute a 3'-5' exonuclease domain.

It belongs to the DNA polymerase type-A family. Single-chain monomer with multiple functions.

The catalysed reaction is DNA(n) + a 2'-deoxyribonucleoside 5'-triphosphate = DNA(n+1) + diphosphate. In addition to polymerase activity, this DNA polymerase exhibits 3'-5' and 5'-3' exonuclease activity. The sequence is that of DNA polymerase I (polA) from Mycobacterium bovis (strain ATCC BAA-935 / AF2122/97).